A 507-amino-acid polypeptide reads, in one-letter code: MIAARHYRKWWLSHIWPKDFSWLVPIESSSVPGPPECPALDEKFQSCQTVDNISLARRVGPPALLYSTGIDSSIAALVARVSCIPTGGHSSCPREYFLSAKTSLVSLVPTMDWTAAEHESGVTQNHQHRMQTEDHDSFAGEIQKLPSPPAGNTGGQNPSDPADEQGWPQRVLNEMKDMLLLLSSDGKILYASPSCKSITGYDANQLQQNALERFIHNDDKTTFAEEMNECITTTRPVHCHFRFRKKDNSSNTSCLLEAHGHPHMKTSEPNDSPENHNEDCIGVFLLCRPYPTRGSQLLDSFLEHKIENVRLNQRIAQLREEEEEDLASGQQLYAGDSTGDSGFRHNSHSGRSNSNQSSFRDTTGSGEENESSDTLTNDDPDSRSYLENAADELGQTEDMSHIEGIEMLTGLHYGDGERSQGLSTGVRQGRLIRYDMESAKLDQQARVIQDSDRKKRQKGEYMCTDCGTSDSPEWRKGPEGPKTLCNACGCKSAVQYTLFSYSSEMSS.

The 65-residue stretch at 170–234 (RVLNEMKDML…EEMNECITTT (65 aa)) folds into the PAS domain. The GATA-type zinc-finger motif lies at 463-488 (CTDCGTSDSPEWRKGPEGPKTLCNAC).

Its function is as follows. Probable transcription factor involved in light regulation. Plays crucial roles in fungal growth and asexual development. Involved in conidiophore formation, sclerotium production, and conidial stress tolerance. Positively regulates the fungal pathogenicity towards maize and aflatoxin B1 production. The chain is Blue light receptor lreB from Aspergillus flavus.